Here is a 603-residue protein sequence, read N- to C-terminus: Serine/threonine-protein kinase PLK1 (603 aa).

Over residues 1–15 (MNAAAKAGKLARAPA) the composition is skewed to low complexity. The interval 1-32 (MNAAAKAGKLARAPADLGKGGVPGDAAPGAPG) is disordered. Lys19 is covalently cross-linked (Glycyl lysine isopeptide (Lys-Gly) (interchain with G-Cter in ubiquitin)). Residues 53–305 (YVRGRFLGKG…IHELLNDEFF (253 aa)) form the Protein kinase domain. ATP-binding positions include 59–67 (LGKGGFAKC) and Lys82. Ser103 bears the Phosphoserine mark. Glu131 is a binding site for ATP. At Ser137 the chain carries Phosphoserine. Catalysis depends on Asp176, which acts as the Proton acceptor. ATP contacts are provided by residues 178–181 (KLGN) and Asp194. Positions 194 to 221 (DFGLATKVEYEGERKKTLCGTPNYIAPE) are activation loop. Thr210 carries the phosphothreonine; by AURKA modification. Thr214 carries the phosphothreonine modification. Residues Ser269 and Ser335 each carry the phosphoserine; by autocatalysis modification. The D-box that targets the protein for proteasomal degradation in anaphase motif lies at 337-340 (RKPL). Lys338 participates in a covalent cross-link: Glycyl lysine isopeptide (Lys-Gly) (interchain with G-Cter in SUMO2). The disordered stretch occupies residues 338–361 (KPLTVLNKGVENPLPDRPREKEEP). The span at 351–361 (LPDRPREKEEP) shows a compositional bias: basic and acidic residues. Phosphoserine is present on residues Ser375 and Ser450. The POLO box 1 domain maps to 410 to 488 (WVSKWVDYSD…LNYFRNYMSE (79 aa)). Residue Lys492 forms a Glycyl lysine isopeptide (Lys-Gly) (interchain with G-Cter in ubiquitin) linkage. A linker region spans residues 493–507 (AGANITPREGDELAR). A Phosphothreonine modification is found at Thr498. The region spanning 510-592 (YLRTWFRTRS…ARTMVDKLLS (83 aa)) is the POLO box 2 domain. The interval 538–540 (HTK) is important for interaction with phosphorylated proteins.

The protein belongs to the protein kinase superfamily. Ser/Thr protein kinase family. CDC5/Polo subfamily. Interacts with CEP170 and EVI5. Interacts and phosphorylates ERCC6L. Interacts with FAM29A. Interacts with SLX4/BTBD12 and TTDN1. Interacts with BUB1B. Interacts (via POLO-box domain) with the phosphorylated form of BUB1, CENPU and CDC25C. Interacts with isoform 3 of SGO1. Interacts with BORA, KIF2A and AURKA. Interacts with TOPORS and CYLD. Interacts with ECT2; the interaction is stimulated upon phosphorylation of ECT2 on 'Thr-444'. Interacts with PRC1. Interacts with KIF20A/MKLP2 (when phosphorylated), leading to the recruitment at the central spindle. Interacts (via POLO box domains) with PPP1R12A/MYPT1 (when previously phosphorylated by CDK1). Part of an astrin (SPAG5)-kinastrin (SKAP) complex containing KNSTRN, SPAG5, PLK1, DYNLL1 and SGO2. Interacts with BIRC6/bruce. Interacts with CDK1-phosphorylated FRY; this interaction occurs in mitotic cells, but not in interphase cells. FRY interaction facilitates AURKA-mediated PLK1 phosphorylation. Interacts with CDK1-phosphorylated DCTN6 during mitotic prometaphase; the interaction facilitates recruitment to kinetochores. Interacts with CEP68; the interaction phosphorylates CEP68. Interacts (via POLO-box domain) with DCTN1. Interacts with CEP20 in later G1, S, G2 and M phases of the cell cycle; this interaction recruits PLK1 to centrosomes, a step required for S phase progression. Interacts with HSF1; this interaction increases upon heat shock but does not modulate neither HSF1 homotrimerization nor DNA-binding activities. Interacts with HNRNPU; this interaction induces phosphorylation of HNRNPU in mitosis. Interacts (via its N-terminus) with RIOK2. Interacts with KLHL22. Interacts (via POLO box domains) with NEDD9/HEF1 (via C-terminus). Interacts (via RVxF motif) with FIRRM; regulates PLK1 kinase activity. Interacts with SKA3; the interaction promotes the stability of PLK1. Interacts with the MTMR3:MTMR4 heterooligomer; brings CEP55 and PLK1 together during early mitosis, regulating the phosphorylation of CEP55 by PLK1 and its recruitment to the midbody where it can mediate cell abscission. Catalytic activity is enhanced by phosphorylation of Thr-210. Phosphorylation at Thr-210 is first detected on centrosomes in the G2 phase of the cell cycle, peaks in prometaphase and gradually disappears from centrosomes during anaphase. Dephosphorylation at Thr-210 at centrosomes is probably mediated by protein phosphatase 1C (PP1C), via interaction with PPP1R12A/MYPT1. Autophosphorylation and phosphorylation of Ser-137 may not be significant for the activation of PLK1 during mitosis, but may enhance catalytic activity during recovery after DNA damage checkpoint. Phosphorylated in vitro by STK10. In terms of processing, ubiquitinated by the anaphase promoting complex/cyclosome (APC/C) in anaphase and following DNA damage, leading to its degradation by the proteasome. Ubiquitination is mediated via its interaction with FZR1/CDH1. Ubiquitination and subsequent degradation prevents entry into mitosis and is essential to maintain an efficient G2 DNA damage checkpoint. Monoubiquitination at Lys-492 by the BCR(KLHL22) ubiquitin ligase complex does not lead to degradation: it promotes PLK1 dissociation from phosphoreceptor proteins and subsequent removal from kinetochores, allowing silencing of the spindle assembly checkpoint (SAC) and chromosome segregation.

It localises to the nucleus. Its subcellular location is the chromosome. The protein resides in the centromere. It is found in the kinetochore. The protein localises to the cytoplasm. It localises to the cytoskeleton. Its subcellular location is the microtubule organizing center. The protein resides in the centrosome. It is found in the spindle. The protein localises to the midbody. The catalysed reaction is L-seryl-[protein] + ATP = O-phospho-L-seryl-[protein] + ADP + H(+). It carries out the reaction L-threonyl-[protein] + ATP = O-phospho-L-threonyl-[protein] + ADP + H(+). With respect to regulation, activated by phosphorylation of Thr-210 by AURKA; phosphorylation by AURKA is enhanced by BORA. Once activated, activity is stimulated by binding target proteins. Binding of target proteins has no effect on the non-activated kinase. Several inhibitors targeting PLKs are currently in development and are under investigation in a growing number of clinical trials, such as BI 2536, an ATP-competitive PLK1 inhibitor or BI 6727, a dihydropteridinone that specifically inhibits the catalytic activity of PLK1. In terms of biological role, serine/threonine-protein kinase that performs several important functions throughout M phase of the cell cycle, including the regulation of centrosome maturation and spindle assembly, the removal of cohesins from chromosome arms, the inactivation of anaphase-promoting complex/cyclosome (APC/C) inhibitors, and the regulation of mitotic exit and cytokinesis. Polo-like kinase proteins act by binding and phosphorylating proteins that are already phosphorylated on a specific motif recognized by the POLO box domains. Phosphorylates BORA, BUB1B/BUBR1, CCNB1, CDC25C, CEP55, ECT2, ERCC6L, FBXO5/EMI1, FOXM1, KIF20A/MKLP2, CENPU, NEDD1, NINL, NPM1, NUDC, PKMYT1/MYT1, KIZ, PPP1R12A/MYPT1, PRC1, RACGAP1/CYK4, RHNO1, SGO1, STAG2/SA2, TEX14, TOPORS, p73/TP73, TPT1, WEE1 and HNRNPU. Plays a key role in centrosome functions and the assembly of bipolar spindles by phosphorylating KIZ, NEDD1 and NINL. NEDD1 phosphorylation promotes subsequent targeting of the gamma-tubulin ring complex (gTuRC) to the centrosome, an important step for spindle formation. Phosphorylation of NINL component of the centrosome leads to NINL dissociation from other centrosomal proteins. Involved in mitosis exit and cytokinesis by phosphorylating CEP55, ECT2, KIF20A/MKLP2, CENPU, PRC1 and RACGAP1. Recruited at the central spindle by phosphorylating and docking PRC1 and KIF20A/MKLP2; creates its own docking sites on PRC1 and KIF20A/MKLP2 by mediating phosphorylation of sites subsequently recognized by the POLO box domains. Phosphorylates RACGAP1, thereby creating a docking site for the Rho GTP exchange factor ECT2 that is essential for the cleavage furrow formation. Promotes the central spindle recruitment of ECT2. Plays a central role in G2/M transition of mitotic cell cycle by phosphorylating CCNB1, CDC25C, FOXM1, CENPU, PKMYT1/MYT1, PPP1R12A/MYPT1 and WEE1. Part of a regulatory circuit that promotes the activation of CDK1 by phosphorylating the positive regulator CDC25C and inhibiting the negative regulators WEE1 and PKMYT1/MYT1. Also acts by mediating phosphorylation of cyclin-B1 (CCNB1) on centrosomes in prophase. Phosphorylates FOXM1, a key mitotic transcription regulator, leading to enhance FOXM1 transcriptional activity. Involved in kinetochore functions and sister chromatid cohesion by phosphorylating BUB1B/BUBR1, FBXO5/EMI1 and STAG2/SA2. PLK1 is high on non-attached kinetochores suggesting a role of PLK1 in kinetochore attachment or in spindle assembly checkpoint (SAC) regulation. Required for kinetochore localization of BUB1B. Regulates the dissociation of cohesin from chromosomes by phosphorylating cohesin subunits such as STAG2/SA2. Phosphorylates SGO1: required for spindle pole localization of isoform 3 of SGO1 and plays a role in regulating its centriole cohesion function. Mediates phosphorylation of FBXO5/EMI1, a negative regulator of the APC/C complex during prophase, leading to FBXO5/EMI1 ubiquitination and degradation by the proteasome. Acts as a negative regulator of p53 family members: phosphorylates TOPORS, leading to inhibit the sumoylation of p53/TP53 and simultaneously enhance the ubiquitination and subsequent degradation of p53/TP53. Phosphorylates the transactivation domain of the transcription factor p73/TP73, leading to inhibit p73/TP73-mediated transcriptional activation and pro-apoptotic functions. Phosphorylates BORA, and thereby promotes the degradation of BORA. Contributes to the regulation of AURKA function. Also required for recovery after DNA damage checkpoint and entry into mitosis. Phosphorylates MISP, leading to stabilization of cortical and astral microtubule attachments required for proper spindle positioning. Together with MEIKIN, acts as a regulator of kinetochore function during meiosis I: required both for mono-orientation of kinetochores on sister chromosomes and protection of centromeric cohesin from separase-mediated cleavage. Phosphorylates CEP68 and is required for its degradation. Regulates nuclear envelope breakdown during prophase by phosphorylating DCTN1 resulting in its localization in the nuclear envelope. Phosphorylates the heat shock transcription factor HSF1, promoting HSF1 nuclear translocation upon heat shock. Phosphorylates HSF1 also in the early mitotic period; this phosphorylation regulates HSF1 localization to the spindle pole, the recruitment of the SCF(BTRC) ubiquitin ligase complex induicing HSF1 degradation, and hence mitotic progression. Regulates mitotic progression by phosphorylating RIOK2. Through the phosphorylation of DZIP1 regulates the localization during mitosis of the BBSome, a ciliary protein complex involved in cilium biogenesis. Regulates DNA repair during mitosis by mediating phosphorylation of POLQ and RHNO1, thereby promoting POLQ recruitment to DNA damage sites. Phosphorylates ATXN10 which may play a role in the regulation of cytokinesis and may stimulate the proteasome-mediated degradation of ATXN10. The chain is Serine/threonine-protein kinase PLK1 (Plk1) from Rattus norvegicus (Rat).